The following is a 330-amino-acid chain: DNA-directed RNA polymerase subunit alpha (330 aa).

Residues 1 to 225 are alpha N-terminal domain (alpha-NTD); the sequence is MSDLAIPTIS…KQFAALVSHN (225 aa). The tract at residues 237 to 330 is alpha C-terminal domain (alpha-CTD); sequence VKYAIPEEKY…KKKNKGMDEA (94 aa).

The protein belongs to the RNA polymerase alpha chain family. As to quaternary structure, homodimer. The RNAP catalytic core consists of 2 alpha, 1 beta, 1 beta' and 1 omega subunit. When a sigma factor is associated with the core the holoenzyme is formed, which can initiate transcription.

It catalyses the reaction RNA(n) + a ribonucleoside 5'-triphosphate = RNA(n+1) + diphosphate. Its function is as follows. DNA-dependent RNA polymerase catalyzes the transcription of DNA into RNA using the four ribonucleoside triphosphates as substrates. This Dehalococcoides mccartyi (strain ATCC BAA-2266 / KCTC 15142 / 195) (Dehalococcoides ethenogenes (strain 195)) protein is DNA-directed RNA polymerase subunit alpha.